A 175-amino-acid chain; its full sequence is MEKFSVSAILLLVAISGTLAKDTTVKSGAKKDPKDSRPKLPQTLSRGWGDQLIWTQTYEEALYRSKTSNRPLMVIHHLDECPHSQALKKVFAEHKEIQKLAEQFVLLNLVYETTDKHLSPDGQYVPRIVFVDPSLTVRADITGRYSNRLYAYEPSDTALLYDNMKKALKLLKTEL.

The N-terminal stretch at 1–20 is a signal peptide; it reads MEKFSVSAILLLVAISGTLA. The segment at 21-40 is required to promote cell adhesion; that stretch reads KDTTVKSGAKKDPKDSRPKL. Positions 24–44 are disordered; sequence TVKSGAKKDPKDSRPKLPQTL. A compositionally biased stretch (basic and acidic residues) spans 29–38; it reads AKKDPKDSRP. Short sequence motifs (homodimer stabilization; interchain) lie at residues 45-54 and 60-67; these read SRGWGDQLIW and EALYRSKT.

It belongs to the AGR family. Monomer and homodimer. Interacts with LYPD3 and DAG1 (alphaDAG1). Interacts with MUC2; disulfide-linked. In terms of tissue distribution, expressed in lung, skeletal muscle, testis, liver, stomach, colon, small intestine, the goblet cells of the intestine and the mucuous neck cells of the stomach.

It localises to the secreted. It is found in the endoplasmic reticulum. Its function is as follows. Required for MUC2 post-transcriptional synthesis and secretion. May play a role in the production of mucus by intestinal cells. Proto-oncogene that may play a role in cell migration, cell differentiation and cell growth. Promotes cell adhesion. In Mus musculus (Mouse), this protein is Anterior gradient protein 2 homolog (Agr2).